A 331-amino-acid polypeptide reads, in one-letter code: Pseudouridylate synthase TRUB2, mitochondrial (331 aa).

The N-terminal 10 residues, 1–10 (MGSAGLSRLH), are a transit peptide targeting the mitochondrion. The active-site Nucleophile is aspartate 98. The disordered stretch occupies residues 296–331 (KSLSPGLDTKQLPSPGWSWDSQGPSSTLGLERGAGQ). Residues 314–323 (WDSQGPSSTL) show a composition bias toward polar residues.

This sequence belongs to the pseudouridine synthase TruB family. In terms of assembly, forms a regulatory protein-RNA complex, consisting of RCC1L, NGRN, RPUSD3, RPUSD4, TRUB2, FASTKD2 and 16S mt-rRNA.

The protein resides in the mitochondrion matrix. The catalysed reaction is a uridine in mRNA = a pseudouridine in mRNA. It carries out the reaction uridine(55) in tRNA = pseudouridine(55) in tRNA. Functionally, minor enzyme contributing to the isomerization of uridine to pseudouridine (pseudouridylation) of specific mitochondrial mRNAs (mt-mRNAs) such as COXI and COXIII mt-mRNAs. As a component of a functional protein-RNA module, consisting of RCC1L, NGRN, RPUSD3, RPUSD4, TRUB2, FASTKD2 and 16S mitochondrial ribosomal RNA (16S mt-rRNA), controls 16S mt-rRNA abundance and is required for intra-mitochondrial translation. Also catalyzes pseudouridylation of some tRNAs, including synthesis of pseudouridine(55) from uracil-55, in the psi GC loop of a subset of tRNAs. This chain is Pseudouridylate synthase TRUB2, mitochondrial, found in Homo sapiens (Human).